The following is a 333-amino-acid chain: Dehydrodolichyl diphosphate synthase complex subunit DHDDS (333 aa).

The (2E,6E)-farnesyl diphosphate site is built by Asp-34, Gly-35, Arg-37, Arg-38, and Arg-85. Residues Asp-34, Gly-35, Arg-37, Arg-38, Arg-85, Arg-205, Arg-211, and Ser-213 each coordinate isopentenyl diphosphate. Position 34 (Asp-34) interacts with Mg(2+).

It belongs to the UPP synthase family. The active dehydrodolichyl diphosphate synthase complex is a heterotetramer composed of a dimer of heterodimer of DHDDS and NUS1. Interacts with NPC2. Requires Mg(2+) as cofactor. As to expression, ubiquitous. Expressed at high levels in testis and kidney. Expressed in epididymis (at protein level).

It localises to the endoplasmic reticulum membrane. The catalysed reaction is n isopentenyl diphosphate + (2E,6E)-farnesyl diphosphate = a di-trans,poly-cis-polyprenyl diphosphate + n diphosphate. The protein operates within protein modification; protein glycosylation. It participates in lipid metabolism. With respect to regulation, activated by phospholipids including cardiolipin, phosphatidylcholine, phosphatidylethanolamine, phosphatidylinositol and phosphatidylserine. In terms of biological role, with NUS1, forms the dehydrodolichyl diphosphate synthase (DDS) complex, an essential component of the dolichol monophosphate (Dol-P) biosynthetic machinery. Both subunits contribute to enzymatic activity, i.e. condensation of multiple copies of isopentenyl pyrophosphate (IPP) to farnesyl pyrophosphate (FPP) to produce dehydrodolichyl diphosphate (Dedol-PP), a precursor of dolichol phosphate which is utilized as a sugar carrier in protein glycosylation in the endoplasmic reticulum (ER). Synthesizes long-chain polyprenols, mostly of C95 and C100 chain length. Regulates the glycosylation and stability of nascent NPC2, thereby promoting trafficking of LDL-derived cholesterol. This is Dehydrodolichyl diphosphate synthase complex subunit DHDDS from Homo sapiens (Human).